We begin with the raw amino-acid sequence, 970 residues long: MSTVSGLKRPQSSEKNHRDRVFVRATRGKVQKVVREQYLRNDIPCQSRACPLCRSKLPKDSRGNVLEPILSEKPMFLEKFGHHYLIPDSNIFYHCIDALEHPNNFFDVIILQTVFSEISSKSIPLYNRMKRLCQEKTKRFTPFSNEFFVDTFVERLDDESANDRNDRAIRNAASWFASHLASLGIKIVLLTDDRENARLAAEQGIQVSTLKDYVQYLPDSEILLDMVSAIADAIASKEQVESGTKNVYELHWSMSRLLACIKNGEVHKGLINISTYNYLEGSVVVPGYNKPVLVSGRENLNRAVQGDIVCIQILPQDQWKTEAEEIADDDEDVVVSTAAEPDSARINDLELITKRNAHPTAKVVGILKRNWRPYVGHVDNATIAQSKGGSQQTVLLTPMDRRVPKIRFRTRQAPRLVGRRIVVAIDLWDASSRYPEGHFVRDLGEMETKEAETEALLLEYDVQHRPFPKAVLDCLPEEGHNWKVPADKTHPLWKNRKDFRDKLICSIDPPGCQDIDDALHACVLPNGNYEVGVHIADVTHFVKPNTSMDSEAASRGTTVYLVDKRIDMLPMLLGTDLCSLRPYVERFAFSCIWEMDENANIIKVHFTKSVIASKEAFSYADAQARIDDQKMQDPLTQGMRVLLKLSKILKQKRMDEGALNLASPEVRIQTDNETSDPMDVEIKQLLETNSLVEEFMLLANISVAQKIYDAFPQTAVLRRHAAPPLTNFDSLQDILRVCKGMHLKCDTSKSLAKSLDECVDPKEPYFNTLLRILTTRCMLSAEYFCSGTFAPPDFRHYGLASPIYTHFTSPIRRYADVLAHRQLAAAIDYETINPSLSDKSRLIEICNGINYRHRMAQMAGRASIEYYVGQALKGGVAEEDAYVIKVFKNGFVVFIARFGLEGIVYTKSLSSVLEPNVEYVEDEYKLNIEIRDQPKPQTVQIQMFQQVRVRVTTVRDEHSGKQKVQITLVY.

The tract at residues 1 to 74 (MSTVSGLKRP…VLEPILSEKP (74 aa)) is not essential for function. The region spanning 83-198 (HYLIPDSNIF…LLTDDRENAR (116 aa)) is the PINc domain. The CSD1 domain maps to 251-334 (HWSMSRLLAC…EIADDDEDVV (84 aa)). Residues 394-461 (VLLTPMDRRV…ETEALLLEYD (68 aa)) form the CSD2 domain. An RNB domain is found at 496 to 827 (RKDFRDKLIC…LAHRQLAAAI (332 aa)). Positions 823–970 (LAAAIDYETI…KQKVQITLVY (148 aa)) are essential for function. An S1 motif domain is found at 869–969 (GQALKGGVAE…GKQKVQITLV (101 aa)).

Belongs to the RNR ribonuclease family. In terms of assembly, component of the RNA exosome complex. Specifically part of the catalytically inactive RNA exosome core complex (Exo-9) which may associate with the catalytic subunits rrp6 and dis3 in cytoplasmic- and nuclear-specific RNA exosome complex forms. Exo-9 is formed by a hexameric base ring of RNase PH domain-containing subunits and a cap ring consisting of csl4, rrp4 and rrp40; dis3 associates with the base ring of Exo-9. Oligomer of dis3, pim1 and spi1. Interacts with ned1. Requires Mg(2+) as cofactor.

Its subcellular location is the cytoplasm. It is found in the nucleus. Functionally, catalytic component of the RNA exosome complex which has 3'-&gt;5' exoribonuclease activity and participates in a multitude of cellular RNA processing and degradation events. In the nucleus, the RNA exosome complex is involved in proper maturation of stable RNA species such as rRNA, snRNA and snoRNA, in the elimination of RNA processing by-products and non-coding 'pervasive' transcripts, such as antisense RNA species and cryptic unstable transcripts (CUTs), and of mRNAs with processing defects, thereby limiting or excluding their export to the cytoplasm. In the cytoplasm, the RNA exosome complex is involved in general mRNA turnover and in RNA surveillance pathways, preventing translation of aberrant mRNAs. The catalytic inactive RNA exosome core complex of 9 subunits (Exo-9) is proposed to play a pivotal role in the binding and presentation of RNA for ribonucleolysis, and to serve as a scaffold for the association with catalytic subunits and accessory proteins or complexes. DIS3 has both 3'-5' exonuclease and endonuclease activities. The exonuclease activity of DIS3 is down-regulated upon association with Exo-9 possibly involving a conformational change in the catalytic domain and threading of the RNA substrate through the complex central channel. Structured substrates can be degraded if they have a 3' single-stranded extension sufficiently long (such as 35 nt poly(A)) to span the proposed complex inner RNA-binding path and to reach the exonuclease site provided by dis3. Implicated in mitotic control. Essential for cell division and spore germination. May be involved in regulating protein dephosphorylation during mitosis. The sequence is that of Exosome complex exonuclease dis3 (dis3) from Schizosaccharomyces pombe (strain 972 / ATCC 24843) (Fission yeast).